The primary structure comprises 57 residues: MKQSEFRRWLEAQGVEVSNGTNHLKLRYQGKRSIMPRHPSQEIKEPLRKAIIKQLGL.

This sequence belongs to the HicA mRNA interferase family. As to quaternary structure, probably forms a complex with the cognate antitoxin HicB 1 which inhibits the mRNA interferase activity.

Its function is as follows. Toxic component of a type II toxin-antitoxin (TA) system. A probable translation-independent mRNA interferase. The protein is Probable mRNA interferase HicA 1 (hicA1) of Photorhabdus laumondii subsp. laumondii (strain DSM 15139 / CIP 105565 / TT01) (Photorhabdus luminescens subsp. laumondii).